We begin with the raw amino-acid sequence, 117 residues long: Large ribosomal subunit protein uL18 (117 aa).

It belongs to the universal ribosomal protein uL18 family. In terms of assembly, part of the 50S ribosomal subunit; part of the 5S rRNA/L5/L18/L25 subcomplex. Contacts the 5S and 23S rRNAs.

In terms of biological role, this is one of the proteins that bind and probably mediate the attachment of the 5S RNA into the large ribosomal subunit, where it forms part of the central protuberance. In Sodalis glossinidius (strain morsitans), this protein is Large ribosomal subunit protein uL18.